Reading from the N-terminus, the 239-residue chain is Sugar fermentation stimulation protein homolog (239 aa).

It belongs to the SfsA family.

This chain is Sugar fermentation stimulation protein homolog, found in Methanobrevibacter smithii (strain ATCC 35061 / DSM 861 / OCM 144 / PS).